The chain runs to 312 residues: Taste receptor type 2 member 7 (312 aa).

Topologically, residues 1 to 9 (MTYETDTTL) are extracellular. A helical membrane pass occupies residues 10–30 (MLVAVGEALVGILGNAFIALV). Residues 31–49 (NFMGWMKNRKIASIDLILS) are Cytoplasmic-facing. A helical membrane pass occupies residues 50–70 (SVAMSRICLQCIILLDCIILV). The Extracellular portion of the chain corresponds to 71-101 (QYPDTYNRGKEMRTVDFFWTLTNHLSVWFAT). A helical transmembrane segment spans residues 102–122 (CLSIFYLFKIANFFHPLFLWI). Topologically, residues 123 to 128 (KWRIDK) are cytoplasmic. Residues 129 to 149 (LILRTLLACVIISLCFSLPVT) traverse the membrane as a helical segment. The Extracellular segment spans residues 150 to 187 (ENLSDDFRRCVKTKERINSTLRCKVNKAGHASVKVNLN). Residues N151 and N167 are each glycosylated (N-linked (GlcNAc...) asparagine). A helical membrane pass occupies residues 188–208 (LVMLFPFSVSLVSFLLLILSL). At 209-235 (WRHTRQIQLSVTGYKDPSTTAHVKAMK) the chain is on the cytoplasmic side. A helical membrane pass occupies residues 236 to 256 (AVISFLALFVVYCLAFLIATS). The Extracellular segment spans residues 257–266 (SYFMPESELA). Residues 267–287 (VIWGELIALIYPSSHSFILIL) traverse the membrane as a helical segment. Topologically, residues 288–312 (GSSKLKQASVRVLCRVKTMLKGKKY) are cytoplasmic.

The protein belongs to the G-protein coupled receptor T2R family. As to expression, expressed in subsets of taste receptor cells of the tongue and palate epithelium and exclusively in gustducin-positive cells. Expressed in 15% taste bud cells in circumvallate and foliate papillae but only in 2% in fungiform papillae. Expressed in gastric and duodenal tissues.

Its subcellular location is the membrane. Functionally, gustducin-coupled receptor implicated in the perception of bitter compounds in the oral cavity and the gastrointestinal tract. Signals through PLCB2 and the calcium-regulated cation channel TRPM5. The sequence is that of Taste receptor type 2 member 7 (Tas2r7) from Mus musculus (Mouse).